Reading from the N-terminus, the 551-residue chain is Scaffold protein OPG125 (551 aa).

It belongs to the orthopoxvirus protein OPG125 family. As to quaternary structure, homotrimer. Self-assembles to form a layer. Interacts with OPG158 (via N-terminus); this interaction is necessary for OPG125 association with membranes.

The protein resides in the membrane. In terms of biological role, scaffold protein which forms a transitory spherical honeycomb lattice providing curvature and rigidity to the convex membrane of crescent and immature virions (IV). This association occurs concomitantly with viral membrane formation. Targeted by the drug rifampicin, which prevents the formation of this lattice, and hence virus morphogenesis. In the presence of rifampicin, irregularly shaped membranes that lack the honeycomb layer accumulate around areas of electron-dense viroplasm. This layer is lost from virions during maturation from IV to mature virion (MV), through the proteolysis of OPG158 N-terminus. In Vaccinia virus (strain Ankara) (VACV), this protein is Scaffold protein OPG125 (OPG125).